The chain runs to 68 residues: Probable tautomerase Cj0270 (68 aa).

Pro-2 (proton acceptor; via imino nitrogen) is an active-site residue.

The protein belongs to the 4-oxalocrotonate tautomerase family.

This chain is Probable tautomerase Cj0270, found in Campylobacter jejuni subsp. jejuni serotype O:2 (strain ATCC 700819 / NCTC 11168).